Consider the following 284-residue polypeptide: P2R1A-PPP2R2A-interacting phosphatase regulator 1 (284 aa).

3 disordered regions span residues 1 to 32 (MAQE…SNSA), 112 to 198 (EESL…PIKR), and 235 to 284 (AHTL…LPID). 2 stretches are compositionally biased toward low complexity: residues 152-164 (SPSL…SSGL) and 172-184 (PTRR…SQSP). Residues 258-269 (STGSPVSLSDSR) are compositionally biased toward polar residues.

It belongs to the FAM122 family.

It is found in the nucleus. The protein resides in the cytoplasm. Its function is as follows. Acts as an inhibitor of serine/threonine-protein phosphatase 2A (PP2A) activity. Potentiates ubiquitin-mediated proteasomal degradation of serine/threonine-protein phosphatase 2A catalytic subunit alpha (PPP2CA). Inhibits PP2A-mediated dephosphorylation of WEE1, promoting ubiquitin-mediated proteolysis of WEE1, thereby releasing G2/M checkpoint. This chain is P2R1A-PPP2R2A-interacting phosphatase regulator 1, found in Gallus gallus (Chicken).